Here is a 621-residue protein sequence, read N- to C-terminus: Stimulated by retinoic acid gene 6 protein-like (621 aa).

The Extracellular portion of the chain corresponds to 1-21 (MLAASTRTRQINITCDNPVDR). An N-linked (GlcNAc...) asparagine glycan is attached at Asn12. Residues 22-42 (EVFLHYSLIPSLCIILVLSFL) traverse the membrane as a helical segment. At 43 to 53 (QRREHRRQRDD) the chain is on the cytoplasmic side. The helical transmembrane segment at 54-74 (TSYLLGNHFGIIVPLDFVGTF) threads the bilayer. Residues 75–110 (SNRWSYGAAFGATANKVMFLFSEGYQPLTVPQWAQA) are Extracellular-facing. Residues 111–131 (FVLFIGGMEVGLSYFPFFACL) form a helical membrane-spanning segment. At 132-137 (SSEFQL) the chain is on the cytoplasmic side. The chain crosses the membrane as a helical span at residues 138-158 (VSSILGFSYSLTWFVVTVLQI). At 159–173 (SQCPHGQFLGRFETL) the chain is on the extracellular side. Residues 174–194 (VFYWPSLLCLGFLLGRFLHMF) form a helical membrane-spanning segment. At 195 to 258 (LKALPVHLGL…CFQFPSRMVG (64 aa)) the chain is on the cytoplasmic side. Residues 259 to 279 (TLLLAFICLYLFIVIEFCVFL) form a helical membrane-spanning segment. Topologically, residues 280–321 (HVRDKLDMFEDKLESYLTHMNETGTLTPIILQVKELISVTKG) are extracellular. Residues 322 to 342 (VWVVTILPAALTCVTYLFHIL) form a helical membrane-spanning segment. The Cytoplasmic portion of the chain corresponds to 343–383 (ACYRKHMKRLWAGDKHFLPQKFHSPSSAASVVAIARYSGWQ). The helical transmembrane segment at 384–404 (IAYILWGYLIIHVVQSLCGVM) threads the bilayer. Topologically, residues 405-424 (LMYGLVLPIIHHRGLEMLQG) are extracellular. A helical membrane pass occupies residues 425 to 445 (FGLGVLTLSIVVGLIILQVWI). The Cytoplasmic portion of the chain corresponds to 446–476 (AGTFFLQPKLGTSDKQKPLALNNRRAFHNFN). Residues 477–497 (YFLFFYNVLLGLGACLSRLLI) form a helical membrane-spanning segment. The Extracellular portion of the chain corresponds to 498–621 (SCLLGTWLIA…TQILLTCSDC (124 aa)). Thr612 bears the Phosphothreonine mark.

In terms of processing, glycosylated. Highly expressed in liver and small intestine. Also expressed in spleen, kidney, colon, stomach, placenta, adipose tissue and isolated adipocytes.

The protein localises to the cell membrane. In terms of biological role, acts as a high-affinity cell-surface receptor for retinol-binding protein RBP4 and mediates RBP4-dependent retinol uptake in the liver. The protein is Stimulated by retinoic acid gene 6 protein-like of Mus musculus (Mouse).